The sequence spans 342 residues: Nuclear hormone receptor family member nhr-150 (342 aa).

The segment at residues 1 to 71 (MCQVCGAAEA…AGMTSKKIQS (71 aa)) is a DNA-binding region (nuclear receptor). An NR C4-type zinc finger spans residues 2–22 (CQVCGAAEADLHFGGISCRAC). Residues 39 to 54 (CTCKTRILDSHPCRSC) form an NR C4-type; degenerate zinc finger. Residues 94–341 (SARIIPRSSL…GFMEIIRESK (248 aa)) enclose the NR LBD domain.

The protein belongs to the nuclear hormone receptor family.

Its subcellular location is the nucleus. Functionally, orphan nuclear receptor. This is Nuclear hormone receptor family member nhr-150 (nhr-150) from Caenorhabditis elegans.